A 333-amino-acid polypeptide reads, in one-letter code: Glycerol-3-phosphate dehydrogenase [NAD(P)+] (333 aa).

Residues W15 and K108 each coordinate NADPH. Sn-glycerol 3-phosphate is bound by residues K108, G136, and S138. A140 contributes to the NADPH binding site. The sn-glycerol 3-phosphate site is built by K191, D244, S254, R255, and N256. The Proton acceptor role is filled by K191. R255 serves as a coordination point for NADPH. NADPH-binding residues include V279 and E281.

Belongs to the NAD-dependent glycerol-3-phosphate dehydrogenase family.

Its subcellular location is the cytoplasm. The enzyme catalyses sn-glycerol 3-phosphate + NAD(+) = dihydroxyacetone phosphate + NADH + H(+). It catalyses the reaction sn-glycerol 3-phosphate + NADP(+) = dihydroxyacetone phosphate + NADPH + H(+). The protein operates within membrane lipid metabolism; glycerophospholipid metabolism. Its function is as follows. Catalyzes the reduction of the glycolytic intermediate dihydroxyacetone phosphate (DHAP) to sn-glycerol 3-phosphate (G3P), the key precursor for phospholipid synthesis. The sequence is that of Glycerol-3-phosphate dehydrogenase [NAD(P)+] from Maricaulis maris (strain MCS10) (Caulobacter maris).